Reading from the N-terminus, the 308-residue chain is Bacitracin transport ATP-binding protein BcrA (308 aa).

In terms of domain architecture, ABC transporter spans 8–236; that stretch reads IETENLTKQY…NRKYTEFDVS (229 aa). An ATP-binding site is contributed by 40 to 47; sequence GRNGAGKT.

This sequence belongs to the ABC transporter superfamily. In terms of assembly, the complex is probably composed of two ATP-binding proteins (BcrA) and two transmembrane proteins (BcrB).

Essential for high-level bacitracin resistance. Part of the ABC transporter complex BcrAB. Probably responsible for energy coupling to the transport system. The chain is Bacitracin transport ATP-binding protein BcrA from Enterococcus faecalis (Streptococcus faecalis).